The following is a 91-amino-acid chain: DNA-directed RNA polymerase subunit omega (91 aa).

The protein belongs to the RNA polymerase subunit omega family. The RNAP catalytic core consists of 2 alpha, 1 beta, 1 beta' and 1 omega subunit. When a sigma factor is associated with the core the holoenzyme is formed, which can initiate transcription.

The enzyme catalyses RNA(n) + a ribonucleoside 5'-triphosphate = RNA(n+1) + diphosphate. Functionally, promotes RNA polymerase assembly. Latches the N- and C-terminal regions of the beta' subunit thereby facilitating its interaction with the beta and alpha subunits. The sequence is that of DNA-directed RNA polymerase subunit omega from Actinobacillus pleuropneumoniae serotype 5b (strain L20).